Reading from the N-terminus, the 636-residue chain is 1-deoxy-D-xylulose-5-phosphate synthase 2 (636 aa).

Residues His-78 and 119–121 each bind thiamine diphosphate; that span reads AHS. Mg(2+) is bound at residue Asp-150. Thiamine diphosphate-binding positions include 151 to 152, Asn-179, Tyr-288, and Glu-370; that span reads GS. Residue Asn-179 participates in Mg(2+) binding.

Belongs to the transketolase family. DXPS subfamily. As to quaternary structure, homodimer. Requires Mg(2+) as cofactor. It depends on thiamine diphosphate as a cofactor.

It catalyses the reaction D-glyceraldehyde 3-phosphate + pyruvate + H(+) = 1-deoxy-D-xylulose 5-phosphate + CO2. It participates in metabolic intermediate biosynthesis; 1-deoxy-D-xylulose 5-phosphate biosynthesis; 1-deoxy-D-xylulose 5-phosphate from D-glyceraldehyde 3-phosphate and pyruvate: step 1/1. Its function is as follows. Catalyzes the acyloin condensation reaction between C atoms 2 and 3 of pyruvate and glyceraldehyde 3-phosphate to yield 1-deoxy-D-xylulose-5-phosphate (DXP). The protein is 1-deoxy-D-xylulose-5-phosphate synthase 2 of Jannaschia sp. (strain CCS1).